The following is a 20-amino-acid chain: Serum amyloid P-component (20 aa).

In terms of domain architecture, Pentraxin (PTX) spans Glx1–Ile20.

Belongs to the pentraxin family. As to quaternary structure, homopentamer. Pentraxin (or pentaxin) have a discoid arrangement of 5 non-covalently bound subunits.

The protein resides in the secreted. The chain is Serum amyloid P-component from Pleuronectes platessa (European plaice).